We begin with the raw amino-acid sequence, 264 residues long: Indole-3-glycerol phosphate synthase (264 aa).

This sequence belongs to the TrpC family.

The catalysed reaction is 1-(2-carboxyphenylamino)-1-deoxy-D-ribulose 5-phosphate + H(+) = (1S,2R)-1-C-(indol-3-yl)glycerol 3-phosphate + CO2 + H2O. The protein operates within amino-acid biosynthesis; L-tryptophan biosynthesis; L-tryptophan from chorismate: step 4/5. The sequence is that of Indole-3-glycerol phosphate synthase from Albidiferax ferrireducens (strain ATCC BAA-621 / DSM 15236 / T118) (Rhodoferax ferrireducens).